A 247-amino-acid polypeptide reads, in one-letter code: MADS-box protein defh21 (247 aa).

An MADS-box domain is found at 1–61 (MGRGKIEVKR…GKLTEYCTPP (61 aa)). Residues 91 to 183 (NDQVIKELTR…WLMSNQIQRQ (93 aa)) enclose the K-box domain.

Expressed exclusively in a few inner cell layers of the inner integuments of the ovules.

Its subcellular location is the nucleus. Its function is as follows. Probable transcription factor. The polypeptide is MADS-box protein defh21 (DEFH21) (Antirrhinum majus (Garden snapdragon)).